The sequence spans 152 residues: Sulfur-rich protein (152 aa).

Positions 1-20 (MSTVPVVQGAGSSNSAQDIS) are disordered. The next 2 membrane-spanning stretches (helical) occupy residues 43–63 (VGLV…LVSA) and 69–89 (AIYL…VGIL).

The protein resides in the membrane. The protein is Sulfur-rich protein (srp) of Chlamydia trachomatis serovar A (strain ATCC VR-571B / DSM 19440 / HAR-13).